Consider the following 358-residue polypeptide: Ganglioside-induced differentiation-associated protein 1 (358 aa).

The 82-residue stretch at 24–105 (VKLILYHWTH…YLEQTFLDER (82 aa)) folds into the GST N-terminal domain. Glycyl lysine isopeptide (Lys-Gly) (interchain with G-Cter in ubiquitin) cross-links involve residues Lys-50, Lys-172, Lys-173, Lys-188, and Lys-190. Positions 153 to 309 (PAYATTRIRS…LISAVLPTAF (157 aa)) constitute a GST C-terminal domain. Residue Lys-203 is modified to N6-acetyllysine; alternate. A Glycyl lysine isopeptide (Lys-Gly) (interchain with G-Cter in ubiquitin); alternate cross-link involves residue Lys-203. Residues Lys-206, Lys-207, and Lys-214 each participate in a glycyl lysine isopeptide (Lys-Gly) (interchain with G-Cter in ubiquitin) cross-link. 2 consecutive transmembrane segments (helical) span residues 292 to 312 (VLGH…FRVA) and 320 to 340 (LGTT…FMLF). Positions 320 to 358 (LGTTLVVGLLAGVGYFAFMLFRKRLGSMILAFRPRPNYF) are required for mitochondrial localization.

The protein belongs to the GST superfamily. In terms of assembly, homodimer. Post-translationally, ubiquitinated by PRKN during mitophagy, leading to its degradation and enhancement of mitophagy. Deubiquitinated by USP30. As to expression, highly expressed in whole brain and spinal cord. Predominant expression in central tissues of the nervous system not only in neurons but also in Schwann cells.

It is found in the mitochondrion outer membrane. The protein localises to the cytoplasm. Functionally, regulates the mitochondrial network by promoting mitochondrial fission. The protein is Ganglioside-induced differentiation-associated protein 1 (GDAP1) of Homo sapiens (Human).